The sequence spans 248 residues: 3-deoxy-manno-octulosonate cytidylyltransferase (248 aa).

Belongs to the KdsB family.

The protein resides in the cytoplasm. The enzyme catalyses 3-deoxy-alpha-D-manno-oct-2-ulosonate + CTP = CMP-3-deoxy-beta-D-manno-octulosonate + diphosphate. The protein operates within nucleotide-sugar biosynthesis; CMP-3-deoxy-D-manno-octulosonate biosynthesis; CMP-3-deoxy-D-manno-octulosonate from 3-deoxy-D-manno-octulosonate and CTP: step 1/1. It functions in the pathway bacterial outer membrane biogenesis; lipopolysaccharide biosynthesis. In terms of biological role, activates KDO (a required 8-carbon sugar) for incorporation into bacterial lipopolysaccharide in Gram-negative bacteria. The chain is 3-deoxy-manno-octulosonate cytidylyltransferase from Escherichia coli O6:H1 (strain CFT073 / ATCC 700928 / UPEC).